A 215-amino-acid polypeptide reads, in one-letter code: ER lumen protein-retaining receptor A (215 aa).

Residues 1 to 2 lie on the Lumenal side of the membrane; the sequence is MN. Residues 3-21 form a helical membrane-spanning segment; it reads IFRFAGDMSHLISVLILLL. Residues 22-35 are Cytoplasmic-facing; sequence KIYATKSCAGISLK. Residues 36–53 form a helical membrane-spanning segment; the sequence is TQELYALVFLTRYLDLFT. The Lumenal portion of the chain corresponds to 54-61; the sequence is DYVSLYNS. Residues 62–82 traverse the membrane as a helical segment; it reads IMKIVFIASSLAIVWCMRRHP. The Cytoplasmic portion of the chain corresponds to 83–98; that stretch reads LVRRSYDKDLDTFRHQ. The chain crosses the membrane as a helical span at residues 99–112; sequence YVVLACFVLGLILN. The Lumenal portion of the chain corresponds to 113 to 119; sequence EKFTVQE. The helical transmembrane segment at 120-139 threads the bilayer; sequence VFWAFSIYLEAVAILPQLVL. The Cytoplasmic segment spans residues 140–151; that stretch reads LQRSGNVDNLTG. The chain crosses the membrane as a helical span at residues 152-170; sequence QYVVFLGAYRGLYIINWIY. Topologically, residues 171–181 are lumenal; sequence RYFTEDHFTRW. Residues 182–202 form a helical membrane-spanning segment; that stretch reads IACVSGLVQTALYADFFYYYY. Over 203–215 the chain is Cytoplasmic; sequence ISWKTNTKLKLPA.

It belongs to the ERD2 family.

The protein localises to the endoplasmic reticulum membrane. In terms of biological role, required for the retention of luminal endoplasmic reticulum proteins. Determines the specificity of the luminal ER protein retention system. Also required for normal vesicular traffic through the Golgi. This receptor recognizes H-D-E-L. In Arabidopsis thaliana (Mouse-ear cress), this protein is ER lumen protein-retaining receptor A (ERD2A).